A 277-amino-acid chain; its full sequence is Large ribosomal subunit protein uL2 (277 aa).

Residues 222–265 (GVAMNPIDHPHGGGEGRTSGGRHPVTPWGKPTKGKKTRTNKSTD) form a disordered region.

It belongs to the universal ribosomal protein uL2 family. As to quaternary structure, part of the 50S ribosomal subunit. Forms a bridge to the 30S subunit in the 70S ribosome.

Its function is as follows. One of the primary rRNA binding proteins. Required for association of the 30S and 50S subunits to form the 70S ribosome, for tRNA binding and peptide bond formation. It has been suggested to have peptidyltransferase activity; this is somewhat controversial. Makes several contacts with the 16S rRNA in the 70S ribosome. The protein is Large ribosomal subunit protein uL2 of Bradyrhizobium sp. (strain BTAi1 / ATCC BAA-1182).